Reading from the N-terminus, the 161-residue chain is tRNA-specific adenosine deaminase (161 aa).

One can recognise a CMP/dCMP-type deaminase domain in the interval 2 to 120 (TQDELYMKEA…GTLMNLLQEE (119 aa)). Histidine 53 lines the Zn(2+) pocket. The active-site Proton donor is glutamate 55. Zn(2+) is bound by residues cysteine 83 and cysteine 86.

The protein belongs to the cytidine and deoxycytidylate deaminase family. Homodimer. Requires Zn(2+) as cofactor.

The enzyme catalyses adenosine(34) in tRNA + H2O + H(+) = inosine(34) in tRNA + NH4(+). Its function is as follows. Catalyzes the deamination of adenosine to inosine at the wobble position 34 of tRNA(Arg2). This chain is tRNA-specific adenosine deaminase, found in Bacillus subtilis (strain 168).